A 1342-amino-acid polypeptide reads, in one-letter code: Cytokinesis protein sepH (1342 aa).

Positions 1–10 (MVSRSSEGAE) are enriched in low complexity. The segment at 1–47 (MVSRSSEGAEGPPPSAPKPPNTPAKSRLSRLGSSPSKREDKSRDDRM) is disordered. Residues 11–22 (GPPPSAPKPPNT) are compositionally biased toward pro residues. Residues 36–47 (SKREDKSRDDRM) are compositionally biased toward basic and acidic residues. The region spanning 61–308 (YQLGDCLGKG…ARKLLKHPWI (248 aa)) is the Protein kinase domain. Residues 67–75 (LGKGAFGSV) and Lys90 contribute to the ATP site. Asp180 serves as the catalytic Proton acceptor. 3 disordered regions span residues 336 to 396 (NEAL…EEDN), 441 to 486 (IKSD…QLQE), and 552 to 591 (ADEN…ISVK). Over residues 369 to 379 (KDTLPSPVSRN) the composition is skewed to polar residues. Residues 658-695 (FAQLEEGLDEMDLEANIARDKHARLRNQVEGLVSSLKT) adopt a coiled-coil conformation. Residues 1201–1342 (SEAYGMGKRK…QTQADADWTP (142 aa)) form a disordered region. Positions 1207–1217 (GKRKPMVRRRS) are enriched in basic residues. 2 stretches are compositionally biased toward polar residues: residues 1218 to 1244 (TSAT…SQSK) and 1273 to 1290 (DGST…TGAS). The segment covering 1315–1324 (RPSSSLSRRQ) has biased composition (low complexity).

This sequence belongs to the protein kinase superfamily. Ser/Thr protein kinase family. CDC7 subfamily. The cofactor is Mg(2+).

It catalyses the reaction L-seryl-[protein] + ATP = O-phospho-L-seryl-[protein] + ADP + H(+). The catalysed reaction is L-threonyl-[protein] + ATP = O-phospho-L-threonyl-[protein] + ADP + H(+). In terms of biological role, required for early events during cytokinesis including localization of cytoskeletal components to the cytokinetic ring. This is Cytokinesis protein sepH from Aspergillus terreus (strain NIH 2624 / FGSC A1156).